The following is a 149-amino-acid chain: Large ribosomal subunit protein uL15 (149 aa).

Residues His-8 to Ala-49 are disordered. A compositionally biased stretch (low complexity) spans Gly-31–Lys-45.

It belongs to the universal ribosomal protein uL15 family. In terms of assembly, part of the 50S ribosomal subunit.

Functionally, binds to the 23S rRNA. This Corynebacterium aurimucosum (strain ATCC 700975 / DSM 44827 / CIP 107346 / CN-1) (Corynebacterium nigricans) protein is Large ribosomal subunit protein uL15.